Here is a 481-residue protein sequence, read N- to C-terminus: Glutamyl-tRNA(Gln) amidotransferase subunit A (481 aa).

Catalysis depends on charge relay system residues K75 and S150. S174 serves as the catalytic Acyl-ester intermediate.

The protein belongs to the amidase family. GatA subfamily. In terms of assembly, heterotrimer of A, B and C subunits.

It catalyses the reaction L-glutamyl-tRNA(Gln) + L-glutamine + ATP + H2O = L-glutaminyl-tRNA(Gln) + L-glutamate + ADP + phosphate + H(+). Its function is as follows. Allows the formation of correctly charged Gln-tRNA(Gln) through the transamidation of misacylated Glu-tRNA(Gln) in organisms which lack glutaminyl-tRNA synthetase. The reaction takes place in the presence of glutamine and ATP through an activated gamma-phospho-Glu-tRNA(Gln). This is Glutamyl-tRNA(Gln) amidotransferase subunit A from Macrococcus caseolyticus (strain JCSC5402) (Macrococcoides caseolyticum).